Reading from the N-terminus, the 417-residue chain is Serine hydroxymethyltransferase (417 aa).

(6S)-5,6,7,8-tetrahydrofolate contacts are provided by residues Leu121 and Gly125–Leu127. Lys229 bears the N6-(pyridoxal phosphate)lysine mark. Position 355–357 (Ser355–Phe357) interacts with (6S)-5,6,7,8-tetrahydrofolate.

The protein belongs to the SHMT family. As to quaternary structure, homodimer. Pyridoxal 5'-phosphate is required as a cofactor.

The protein resides in the cytoplasm. It catalyses the reaction (6R)-5,10-methylene-5,6,7,8-tetrahydrofolate + glycine + H2O = (6S)-5,6,7,8-tetrahydrofolate + L-serine. The protein operates within one-carbon metabolism; tetrahydrofolate interconversion. It functions in the pathway amino-acid biosynthesis; glycine biosynthesis; glycine from L-serine: step 1/1. Catalyzes the reversible interconversion of serine and glycine with tetrahydrofolate (THF) serving as the one-carbon carrier. This reaction serves as the major source of one-carbon groups required for the biosynthesis of purines, thymidylate, methionine, and other important biomolecules. Also exhibits THF-independent aldolase activity toward beta-hydroxyamino acids, producing glycine and aldehydes, via a retro-aldol mechanism. This chain is Serine hydroxymethyltransferase, found in Klebsiella pneumoniae (strain 342).